We begin with the raw amino-acid sequence, 420 residues long: Tyrosine--tRNA ligase (420 aa).

Residue Tyr36 participates in L-tyrosine binding. The short motif at Pro41 to His50 is the 'HIGH' region element. Residues Tyr170 and Gln174 each contribute to the L-tyrosine site. Positions Lys231–Ser235 match the 'KMSKS' region motif. ATP is bound at residue Lys234. The S4 RNA-binding domain occupies Thr353–Gln420.

The protein belongs to the class-I aminoacyl-tRNA synthetase family. TyrS type 1 subfamily. As to quaternary structure, homodimer.

The protein resides in the cytoplasm. The catalysed reaction is tRNA(Tyr) + L-tyrosine + ATP = L-tyrosyl-tRNA(Tyr) + AMP + diphosphate + H(+). Functionally, catalyzes the attachment of tyrosine to tRNA(Tyr) in a two-step reaction: tyrosine is first activated by ATP to form Tyr-AMP and then transferred to the acceptor end of tRNA(Tyr). This chain is Tyrosine--tRNA ligase, found in Staphylococcus aureus (strain bovine RF122 / ET3-1).